Reading from the N-terminus, the 250-residue chain is Methylthioribulose-1-phosphate dehydratase (250 aa).

Position 103 (Cys-103) interacts with substrate. Zn(2+) contacts are provided by His-121 and His-123. Glu-146 acts as the Proton donor/acceptor in catalysis. Zn(2+) is bound at residue His-211.

It belongs to the aldolase class II family. MtnB subfamily. The cofactor is Zn(2+).

The protein resides in the cytoplasm. The enzyme catalyses 5-(methylsulfanyl)-D-ribulose 1-phosphate = 5-methylsulfanyl-2,3-dioxopentyl phosphate + H2O. It participates in amino-acid biosynthesis; L-methionine biosynthesis via salvage pathway; L-methionine from S-methyl-5-thio-alpha-D-ribose 1-phosphate: step 2/6. Catalyzes the dehydration of methylthioribulose-1-phosphate (MTRu-1-P) into 2,3-diketo-5-methylthiopentyl-1-phosphate (DK-MTP-1-P). This is Methylthioribulose-1-phosphate dehydratase from Clavispora lusitaniae (strain ATCC 42720) (Yeast).